The sequence spans 130 residues: Ribosome-binding factor A (130 aa).

It belongs to the RbfA family. As to quaternary structure, monomer. Binds 30S ribosomal subunits, but not 50S ribosomal subunits or 70S ribosomes.

It is found in the cytoplasm. In terms of biological role, one of several proteins that assist in the late maturation steps of the functional core of the 30S ribosomal subunit. Associates with free 30S ribosomal subunits (but not with 30S subunits that are part of 70S ribosomes or polysomes). Required for efficient processing of 16S rRNA. May interact with the 5'-terminal helix region of 16S rRNA. This Prochlorococcus marinus (strain MIT 9215) protein is Ribosome-binding factor A.